The sequence spans 393 residues: CCA-adding enzyme (393 aa).

Residues Gly-27 and Arg-30 each contribute to the ATP site. CTP contacts are provided by Gly-27 and Arg-30. Mg(2+) is bound by residues Asp-40 and Asp-42. ATP-binding residues include Arg-111, Asp-154, Arg-157, Arg-160, and Arg-163. CTP contacts are provided by Arg-111, Asp-154, Arg-157, Arg-160, and Arg-163.

It belongs to the tRNA nucleotidyltransferase/poly(A) polymerase family. Bacterial CCA-adding enzyme type 3 subfamily. In terms of assembly, homodimer. Mg(2+) serves as cofactor.

The catalysed reaction is a tRNA precursor + 2 CTP + ATP = a tRNA with a 3' CCA end + 3 diphosphate. It carries out the reaction a tRNA with a 3' CCA end + 2 CTP + ATP = a tRNA with a 3' CCACCA end + 3 diphosphate. Its function is as follows. Catalyzes the addition and repair of the essential 3'-terminal CCA sequence in tRNAs without using a nucleic acid template. Adds these three nucleotides in the order of C, C, and A to the tRNA nucleotide-73, using CTP and ATP as substrates and producing inorganic pyrophosphate. tRNA 3'-terminal CCA addition is required both for tRNA processing and repair. Also involved in tRNA surveillance by mediating tandem CCA addition to generate a CCACCA at the 3' terminus of unstable tRNAs. While stable tRNAs receive only 3'-terminal CCA, unstable tRNAs are marked with CCACCA and rapidly degraded. The polypeptide is CCA-adding enzyme (Listeria monocytogenes serotype 4b (strain F2365)).